The sequence spans 170 residues: Lipoprotein signal peptidase (170 aa).

The next 2 helical transmembrane spans lie at 71–91 (YFFI…ILEN) and 97–116 (AIAY…DRVF). Catalysis depends on residues Asp-122 and Asp-140. Residues 131–151 (WHWPAFNLADIAIVLGALLFV) form a helical membrane-spanning segment.

This sequence belongs to the peptidase A8 family.

The protein resides in the cell inner membrane. The enzyme catalyses Release of signal peptides from bacterial membrane prolipoproteins. Hydrolyzes -Xaa-Yaa-Zaa-|-(S,diacylglyceryl)Cys-, in which Xaa is hydrophobic (preferably Leu), and Yaa (Ala or Ser) and Zaa (Gly or Ala) have small, neutral side chains.. Its pathway is protein modification; lipoprotein biosynthesis (signal peptide cleavage). Its function is as follows. This protein specifically catalyzes the removal of signal peptides from prolipoproteins. The polypeptide is Lipoprotein signal peptidase (Serratia marcescens).